The following is a 1138-amino-acid chain: Myelin regulatory factor (1138 aa).

At 1–768 (MEVVDETEAL…CISQRFLQGT (768 aa)) the chain is on the cytoplasmic side. 4 disordered regions span residues 56 to 150 (TASF…YSPQ), 171 to 200 (VSSR…HYPV), 246 to 267 (AELP…NTLN), and 279 to 339 (PGTV…SDSL). A compositionally biased stretch (low complexity) spans 67–88 (PGSSGLHHLSPPGSGPSPGRHG). Lysine 123 is subject to N6-acetyllysine. Pro residues predominate over residues 178–198 (PPPPPAHLPGPPPPPPPPPHY). A DNA-binding region (NDT80) is located at residues 250 to 541 (PHPSKKRKHS…SNPGQFESDS (292 aa)). The Nuclear localization signal motif lies at 254–257 (KKRK). Pro residues predominate over residues 286-302 (PPHPARAPSPPWPPQGP). Residues 329–339 (SPGLLQDSDSL) are compositionally biased toward low complexity. The Nuclear localization signal motif lies at 491–494 (KKGK). The region spanning 587 to 696 (SDLRAKEHVQ…KLTDNLETRI (110 aa)) is the Peptidase S74 domain. The stretch at 680–711 (GAVKELCKLTDNLETRIDELERWSHKLAKLRR) forms a coiled coil. Residues 721–733 (SGAFSHAGSQFSR) show a composition bias toward polar residues. Positions 721–753 (SGAFSHAGSQFSRAGSVPHKKRPPKLANKSSPA) are disordered. Residues 765 to 1003 (LQGTIIALVV…QGQLDPAPSL (239 aa)) form a required for interaction with TMEM98 region. Residues 769-789 (IIALVVVMAFSVVSMSTLYVL) form a helical membrane-spanning segment. Residues 790 to 1138 (SLRSEEDLVD…YYFHFYRLCD (349 aa)) lie on the Lumenal side of the membrane. The segment covering 891–900 (ATDPALGPTL) has biased composition (low complexity). 2 disordered regions span residues 891 to 922 (ATDP…APLP) and 951 to 999 (ASPV…QLDP). Polar residues-rich tracts occupy residues 961-974 (QSKT…NLQS) and 987-999 (PAQF…QLDP). 3 N-linked (GlcNAc...) asparagine glycosylation sites follow: asparagine 1030, asparagine 1052, and asparagine 1116.

The protein belongs to the MRF family. Homotrimer. Interacts (via C-terminal region) with TMEM98; the interaction inhibits MYRF self-cleavage. In terms of processing, glycosylated. Follows autocatalytic cleavage via the peptidase S74 domain. Autoprocessing is apparently constitutive and is essential for transcriptional activity. Autocatalytic cleavage is inhibited by interaction with TMEM98. Specifically expressed by postmitotic oligodendrocytes in the CNS. Not detected in the peripheral nervous system (PNS).

The protein resides in the endoplasmic reticulum membrane. The protein localises to the nucleus. It is found in the cytoplasm. Constitutes a precursor of the transcription factor. Mediates the autocatalytic cleavage that releases the Myelin regulatory factor, N-terminal component that specifically activates transcription of central nervous system (CNS) myelin genes. Its function is as follows. Membrane-bound part that has no transcription factor activity and remains attached to the endoplasmic reticulum membrane following cleavage. Functionally, transcription factor that specifically activates expression of myelin genes such as MBP, MOG, MAG, DUSP15 and PLP1 during oligodendrocyte (OL) maturation, thereby playing a central role in oligodendrocyte maturation and CNS myelination. Specifically recognizes and binds DNA sequence 5'-CTGGYAC-3' in the regulatory regions of myelin-specific genes and directly activates their expression. Not only required during oligodendrocyte differentiation but is also required on an ongoing basis for the maintenance of expression of myelin genes and for the maintenance of a mature, viable oligodendrocyte phenotype. The protein is Myelin regulatory factor (Myrf) of Mus musculus (Mouse).